We begin with the raw amino-acid sequence, 86 residues long: OMEGA-stichotoxin-Shd4a (86 aa).

The first 23 residues, 1–23 (MASFRTLFACVVILCCVLWSSMA), serve as a signal peptide directing secretion. Residues 24–36 (RYGEDMEVETEMN) constitute a propeptide that is removed on maturation. Positions 40–82 (EGVRCTGQHASSFCLNGGTCRHIASLGEYYCICPGDYTGHRCD) constitute an EGF-like domain. 3 disulfides stabilise this stretch: C44-C59, C53-C70, and C72-C81.

The protein belongs to the EGF domain peptide family.

It localises to the secreted. The protein resides in the nematocyst. Its function is as follows. Has both toxic and EGF activity. Its EGF activity consists of rounding cells (morphological change) and inducing tyrosine phosphorylation of the EGFR in A431 cells, but with a lower potency that human EGF. The protein is OMEGA-stichotoxin-Shd4a of Stichodactyla haddoni (Saddle carpet anemone).